Consider the following 111-residue polypeptide: Cytochrome c (111 aa).

A1 bears the N-acetylalanine mark. Heme c-binding residues include C22, C25, and H26. K80 carries the N6,N6,N6-trimethyllysine modification. A heme c-binding site is contributed by M88. Residue K94 is modified to N6,N6,N6-trimethyllysine.

It belongs to the cytochrome c family. Binds 1 heme c group covalently per subunit.

The protein localises to the mitochondrion intermembrane space. Functionally, electron carrier protein. The oxidized form of the cytochrome c heme group can accept an electron from the heme group of the cytochrome c1 subunit of cytochrome reductase. Cytochrome c then transfers this electron to the cytochrome oxidase complex, the final protein carrier in the mitochondrial electron-transport chain. The protein is Cytochrome c of Cucurbita maxima (Pumpkin).